We begin with the raw amino-acid sequence, 834 residues long: Protein SEY1 (834 aa).

Residues 1-26 are disordered; that stretch reads MSNVPSPTVTLEGDSPDAAHEAVSSS. Residues 1–733 lie on the Cytoplasmic side of the membrane; sequence MSNVPSPTVT…KRSIMQHVTQ (733 aa). Residues 63 to 296 form the GB1/RHD3-type G domain; it reads PGDYRIISVF…SESFLFKPNY (234 aa). 73 to 80 contacts GTP; sequence GSQSTGKS. Residues 659–688 adopt a coiled-coil conformation; that stretch reads VRDKKLKRQYETVREEKEAEEEDEDEWDSE. The segment at 670–689 is disordered; it reads TVREEKEAEEEDEDEWDSED. Residues 676 to 689 are compositionally biased toward acidic residues; it reads EAEEEDEDEWDSED. Residues 734–754 form a helical membrane-spanning segment; sequence IPYYIYIVILVLGWNEFMAIL. Topologically, residues 755 to 757 are lumenal; it reads RNP. Residues 758–778 traverse the membrane as a helical segment; it reads FFFTLLIMLAGATYVMYSMNL. Residues 779-834 are Cytoplasmic-facing; that stretch reads LGPASIVVQRMANEALGLAKEKLREFVVDDHMQHGHNMKKMTTNDIELDDLSEEST.

Belongs to the TRAFAC class dynamin-like GTPase superfamily. GB1/RHD3 GTPase family. RHD3 subfamily.

It is found in the endoplasmic reticulum membrane. Cooperates with the reticulon proteins and tubule-shaping DP1 family proteins to generate and maintain the structure of the tubular endoplasmic reticulum network. Has GTPase activity, which is required for its function in ER organization. The protein is Protein SEY1 of Clavispora lusitaniae (strain ATCC 42720) (Yeast).